We begin with the raw amino-acid sequence, 531 residues long: CTP synthase (531 aa).

The amidoligase domain stretch occupies residues 1–265; it reads MAKYIFITGG…DRIITERLNL (265 aa). S13 serves as a coordination point for CTP. A UTP-binding site is contributed by S13. 14-19 serves as a coordination point for ATP; it reads SLGKGI. Y54 serves as a coordination point for L-glutamine. D71 contributes to the ATP binding site. Mg(2+)-binding residues include D71 and E139. CTP-binding positions include 146–148, 186–191, and K222; these read DIE and KTKPTQ. Residues 186 to 191 and K222 contribute to the UTP site; that span reads KTKPTQ. A Glutamine amidotransferase type-1 domain is found at 290-529; sequence NVALVGKYVE…IRACLEYKRK (240 aa). G349 lines the L-glutamine pocket. The active-site Nucleophile; for glutamine hydrolysis is C376. L-glutamine is bound by residues 377 to 380, E400, and R457; that span reads LGMQ. Active-site residues include H502 and E504.

Belongs to the CTP synthase family. Homotetramer.

It catalyses the reaction UTP + L-glutamine + ATP + H2O = CTP + L-glutamate + ADP + phosphate + 2 H(+). It carries out the reaction L-glutamine + H2O = L-glutamate + NH4(+). The catalysed reaction is UTP + NH4(+) + ATP = CTP + ADP + phosphate + 2 H(+). The protein operates within pyrimidine metabolism; CTP biosynthesis via de novo pathway; CTP from UDP: step 2/2. With respect to regulation, allosterically activated by GTP, when glutamine is the substrate; GTP has no effect on the reaction when ammonia is the substrate. The allosteric effector GTP functions by stabilizing the protein conformation that binds the tetrahedral intermediate(s) formed during glutamine hydrolysis. Inhibited by the product CTP, via allosteric rather than competitive inhibition. In terms of biological role, catalyzes the ATP-dependent amination of UTP to CTP with either L-glutamine or ammonia as the source of nitrogen. Regulates intracellular CTP levels through interactions with the four ribonucleotide triphosphates. This chain is CTP synthase, found in Aquifex aeolicus (strain VF5).